A 1611-amino-acid chain; its full sequence is DNA (cytosine-5)-methyltransferase 1 (1611 aa).

Residues 1–120 (MPARTAPARV…SQTSGEDCRV (120 aa)) form an interaction with DMAP1 region. The interaction with DNMT3A stretch occupies residues 1–148 (MPARTAPARV…RRSKSDGETK (148 aa)). 2 interaction with the PRC2/EED-EZH2 complex regions span residues 1–334 (MPAR…TEKK) and 306–603 (KPQV…TIRQ). S15 carries the phosphoserine modification. Positions 16–109 (RAFSLPDDVR…SREANGCLEN (94 aa)) constitute a DMAP1-binding domain. The residue at position 70 (K70) is an N6,N6-dimethyllysine; by EHMT2. A disordered region spans residues 123-328 (AEKGKPPKPV…EEKRRRTTYR (206 aa)). S133 is subject to Phosphoserine. At T137 the chain carries Phosphothreonine. Position 141 is a phosphoserine (S141). K142 carries the N6-methyllysine; by SETD7 modification. S143 is modified (phosphoserine; by PKB/AKT1). Residues 149–216 (SEVSSSPRIT…TSRERVAGLL (68 aa)) form an interaction with DNMT3B region. Phosphoserine occurs at positions 152 and 154. K160 carries the N6-acetyllysine modification. Residues 163–174 (RQTTITSHFPRG) form an interaction with PCNA region. Low complexity predominate over residues 163–174 (RQTTITSHFPRG). Residue T166 is modified to Phosphothreonine. A Nuclear localization signal motif is present at residues 177–204 (KRKPEEEPEKVKSDDSVDEEKDQEEKRR). Composition is skewed to basic and acidic residues over residues 178–191 (RKPE…KSDD), 199–212 (QEEK…RERV), 220–265 (EPGR…RDVR), 279–311 (KDEK…QVSD), and 319–328 (EEKRRRTTYR). Residue K188 is modified to N6-acetyllysine. The residue at position 257 (K257) is an N6-acetyllysine; alternate. K257 is covalently cross-linked (Glycyl lysine isopeptide (Lys-Gly) (interchain with G-Cter in SUMO2); alternate). A Phosphoserine modification is found at S310. The DNA replication foci-targeting sequence stretch occupies residues 329 to 548 (ELTEKKMTRT…NLNRFTEDSL (220 aa)). The Zn(2+) site is built by C351 and C354. Phosphoserine occurs at positions 392 and 396. C412 and H416 together coordinate Zn(2+). Residues S507 and S547 each carry the phosphoserine modification. A disordered region spans residues 594–614 (RAERRQTIRQPAKEKDKGPTK). A CXXC-type zinc finger spans residues 643 to 689 (NAFKRRRCGVCEICQQPECGKCKACKDMVKFGGSGRSKQACQKRRCP). Zn(2+)-binding residues include C650, C653, C656, C661, C664, C667, C683, and C688. Residues 690–751 (NMAMKEADDD…SYYKKVCIDS (62 aa)) are autoinhibitory linker. A disordered region spans residues 695-726 (EADDDEEVDDNIPEMPSPKKMHQGKKKKQNKN). Positions 696-706 (ADDDEEVDDNI) are enriched in acidic residues. S711 is subject to Phosphoserine. Positions 713-725 (KKMHQGKKKKQNK) are enriched in basic residues. S729 carries the post-translational modification Phosphoserine. K746 is modified (N6-acetyllysine). The 126-residue stretch at 752 to 877 (ETLEVGDCVS…QDYARFESPP (126 aa)) folds into the BAH 1 domain. S875 is modified (phosphoserine). N6-acetyllysine is present on residues K888, K954, K958, K972, and K1051. Residues 969–1097 (HYRKYSDYIK…AKSKSFEDPP (129 aa)) form the BAH 2 domain. Positions 1091–1126 (KSFEDPPNHARSTGNKGKGKGKGKNRTKSQTCEPSE) are disordered. A run of 4 repeats spans residues 1106–1107 (KG), 1108–1109 (KG), 1110–1111 (KG), and 1112–1113 (KG). Residues 1106-1115 (KGKGKGKGKN) form a 5 X 2 AA tandem repeats of K-G region. Basic residues predominate over residues 1107 to 1117 (GKGKGKGKNRT). 5 positions are modified to N6-acetyllysine: K1108, K1110, K1112, K1114, and K1118. The stretch at 1114–1115 (KN) is one 5; approximate repeat. The interaction with the PRC2/EED-EZH2 complex stretch occupies residues 1118-1611 (KSQTCEPSEL…AKIKEEAAKD (494 aa)). The region spanning 1136–1595 (LRTLDVFSGC…LEIKRCMLAK (460 aa)) is the SAM-dependent MTase C5-type domain. Residues 1136–1611 (LRTLDVFSGC…AKIKEEAAKD (476 aa)) are catalytic. S-adenosyl-L-methionine-binding positions include S1143, 1147-1148 (GL), 1165-1166 (EM), 1187-1188 (DC), and C1188. The active site involves C1223. N6-acetyllysine occurs at positions 1346 and 1412. Positions 1574 and 1576 each coordinate S-adenosyl-L-methionine. K1605 is covalently cross-linked (Glycyl lysine isopeptide (Lys-Gly) (interchain with G-Cter in SUMO2)).

The protein belongs to the class I-like SAM-binding methyltransferase superfamily. C5-methyltransferase family. In terms of assembly, homodimer. Forms a stable complex with E2F1, BB1 and HDAC1. Forms a complex with DMAP1 and HDAC2, with direct interaction. Interacts with the PRC2/EED-EZH2 complex. Probably part of a corepressor complex containing ZNF304, TRIM28, SETDB1 and DNMT1. Interacts with UHRF1; promoting its recruitment to hemimethylated DNA. Interacts with USP7, promoting its deubiquitination. Interacts with PCNA. Interacts with MBD2 and MBD3. Interacts with DNMT3A and DNMT3B. Interacts with UBC9. Interacts with CSNK1D. Interacts with HDAC1. Interacts with BAZ2A/TIP5. Interacts with SIRT7. Interacts with ZNF263; recruited to the SIX3 promoter along with other proteins involved in chromatin modification and transcriptional corepression where it contributes to transcriptional repression. Interacts with L3MBTL3 and DCAF5; the interaction requires DNMT1 methylation at Lys-142 and is necessary to target DNMT1 for ubiquitination by the CRL4-DCAF5 E3 ubiquitin ligase complex and proteasomal degradation. Interacts with PHF20L1; the interaction requires DNMT1 methylation at Lys-142 and protects DNMT1 from ubiquitination and proteasomal degradation. Sumoylated; sumoylation increases activity. Post-translationally, acetylation on multiple lysines, mainly by KAT2B/PCAF, regulates cell cycle G(2)/M transition. Deacetylation of Lys-1346 and Lys-1412 by SIRT1 increases methyltransferase activity. In terms of processing, phosphorylation of Ser-154 by CDKs is important for enzymatic activity and protein stability. Phosphorylation of Ser-143 by AKT1 prevents methylation by SETD7 thereby increasing DNMT1 stability. Methylation at Lys-142 by SETD7 is necessary for the regulation of DNMT1 proteasomal degradation. Post-translationally, ubiquitinated by UHRF1; interaction with USP7 counteracts ubiquitination by UHRF1 by promoting deubiquitination and preventing degradation by the proteasome.

It is found in the nucleus. The enzyme catalyses a 2'-deoxycytidine in DNA + S-adenosyl-L-methionine = a 5-methyl-2'-deoxycytidine in DNA + S-adenosyl-L-homocysteine + H(+). Functionally, methylates CpG residues. Preferentially methylates hemimethylated DNA. Associates with DNA replication sites in S phase maintaining the methylation pattern in the newly synthesized strand, that is essential for epigenetic inheritance. Associates with chromatin during G2 and M phases to maintain DNA methylation independently of replication. It is responsible for maintaining methylation patterns established in development. DNA methylation is coordinated with methylation of histones. Mediates transcriptional repression by direct binding to HDAC2. In association with DNMT3B and via the recruitment of CTCFL/BORIS, involved in activation of BAG1 gene expression by modulating dimethylation of promoter histone H3 at H3K4 and H3K9. Probably forms a corepressor complex required for activated KRAS-mediated promoter hypermethylation and transcriptional silencing of tumor suppressor genes (TSGs) or other tumor-related genes in colorectal cancer (CRC) cells. Also required to maintain a transcriptionally repressive state of genes in undifferentiated embryonic stem cells (ESCs). Associates at promoter regions of tumor suppressor genes (TSGs) leading to their gene silencing. Promotes tumor growth. The protein is DNA (cytosine-5)-methyltransferase 1 (DNMT1) of Bos taurus (Bovine).